The primary structure comprises 190 residues: Ribonuclease HII (190 aa).

The 188-residue stretch at 3-190 (KLIAGVDEVG…KPVKALLEEK (188 aa)) folds into the RNase H type-2 domain. Residues D9, E10, and D101 each contribute to the a divalent metal cation site.

It belongs to the RNase HII family. It depends on Mn(2+) as a cofactor. The cofactor is Mg(2+).

It is found in the cytoplasm. The catalysed reaction is Endonucleolytic cleavage to 5'-phosphomonoester.. In terms of biological role, endonuclease that specifically degrades the RNA of RNA-DNA hybrids. In Alteromonas mediterranea (strain DSM 17117 / CIP 110805 / LMG 28347 / Deep ecotype), this protein is Ribonuclease HII.